Here is a 1237-residue protein sequence, read N- to C-terminus: MSSAPRRPASGADSFRTPEPEILGPATAGFPEQEEDELHRTLGVERFEEILQEAGSRGGEEPGRSYGEEDFEYHRQSSHHIHHPLSTHLPPDTRRRKTPQGPGRKSRRRPGASPTGETPTIEEGEEDEDEASEAEGARAPTQPSPASTPSSVQFFLQEDDGADRKAERTSPSPPPPLPHQEAAPRATKGAQTGALVEEVMAVAGGTAGGDDGGASGRPLTKAQPGHRSYNLQERRRIGSMTGAEQALLPRVPTDESEAQTLATADLDLMKSHRFEDVPGVRRHLVRKNAKGSVQSGREGREPGPTPRARPRAPHKPHEVFVELNELLLDKNQEPQWRETARWIKFEEDVEEETERWGKPHVASLSFRSLLELRRTLAHGAVLLDLDQQTLPGVAHQVVEQMVISDQIKAEDRADVLRALLLKHSHPSDEKDFSFPRNISAGSLGSLLGHHHGQGAESDPHVTEPLIGGVPETRLEVERERELSPPAPPAGITRSKSKHELKLLEKIPENAEATVVLVGCVEFLSRPTMAFVRLREAVELDAVLEVPVPVRFLFLLLGPSSANMDYHEIGRSISTLMSDKQFHEAAYLADEREDLLTAINAFLDCSVVLPPSEVQGEELLRSVAHFQRQMLKKREEQGRLLPTGAGLEPKSAQDKALLQMVEAAGAVEDDPLRRTGRPFGGLIRDVRRRYPHYLSDFRDALDPQCLAAVIFIYFAALSPAITFGGLLGEKTQDLIGVSELIMSTALQGVVFCLLGAQPLLVIGFSGPLLVFEEAFFSFCSSNDLEYLVGRVWIGFWLVLLALLMVALEGSFLVRFVSRFTQEIFAFLISLIFIYETFYKLVKIFQEHPLHGCSVSNSSEADSGDNATWAGTRVTLGLGNGSSAGPAGQGRPRGQPNTALLSLVLMAGTFFIAFFLRKFKNGRFFPGRVRRVIGDFGVPIAILIMVLVDYSIEDTYTQKLSVPSGFSVTAPEKRGWVINPLGEKSSFPVWMMVASLLPAILVFILIFMETQITTLIISKKERMLQKGSGFHLDLLLIVAMGGICALFGLPWLAAATVRSVTHANALTVMSKAVAPGDKPKIQEVKEQRVTGLLVALLVGLSIVIGDLLRQIPLAVLFGIFLYMGVTSLNGIQFYERLHLLLMPPKHHPDVTYVKKVRTLRMHLFTALQLLCLALLWAVMSTAASLAFPFILILTVPLRMVVLTRIFTEREMKCLDANEAEPVFDEREGVDEYNEMPMPV.

Positions 1–237 are disordered; that stretch reads MSSAPRRPAS…SYNLQERRRI (237 aa). Residues 1-704 are Cytoplasmic-facing; that stretch reads MSSAPRRPAS…DFRDALDPQC (704 aa). Composition is skewed to basic and acidic residues over residues 37–49 and 58–75; these read ELHR…RFEE and GGEE…EYHR. Composition is skewed to basic residues over residues 76 to 85 and 94 to 110; these read QSSHHIHHPL and RRRK…RRRP. Residues Ser-113, Ser-132, Ser-144, Ser-170, and Ser-172 each carry the phosphoserine modification. Residues 120–133 are compositionally biased toward acidic residues; it reads TIEEGEEDEDEASE. Residues 137-151 show a composition bias toward low complexity; the sequence is ARAPTQPSPASTPSS. A compositionally biased stretch (gly residues) spans 205–215; the sequence is GTAGGDDGGAS. Residue Ser-239 is modified to Phosphoserine. Thr-253 carries the phosphothreonine modification. Lys-270 is modified (N6-methyllysine). The interval 286–316 is disordered; it reads RKNAKGSVQSGREGREPGPTPRARPRAPHKP. Ser-439 carries the phosphoserine modification. The interval 445-466 is disordered; that stretch reads SLLGHHHGQGAESDPHVTEPLI. A membrane (anion exchange) region spans residues 704–1237; that stretch reads CLAAVIFIYF…DEYNEMPMPV (534 aa). The next 4 helical transmembrane spans lie at 705 to 725, 750 to 770, 792 to 812, and 822 to 842; these read LAAV…FGGL, FCLL…LLVF, IGFW…SFLV, and IFAF…LVKI. Over 843–893 the chain is Extracellular; it reads FQEHPLHGCSVSNSSEADSGDNATWAGTRVTLGLGNGSSAGPAGQGRPRGQ. N-linked (GlcNAc...) asparagine glycosylation is found at Asn-855, Asn-864, and Asn-878. The helical transmembrane segment at 894 to 914 threads the bilayer; it reads PNTALLSLVLMAGTFFIAFFL. The Cytoplasmic portion of the chain corresponds to 915–929; sequence RKFKNGRFFPGRVRR. The next 5 membrane-spanning stretches (helical) occupy residues 930-950, 985-1005, 1032-1052, 1086-1106, and 1109-1129; these read VIGD…DYSI, FPVW…ILIF, LLLI…WLAA, RVTG…GDLL, and IPLA…LNGI. A lipid anchor (S-palmitoyl cysteine) is attached at Cys-1169. Residues 1170–1190 form a helical membrane-spanning segment; the sequence is LALLWAVMSTAASLAFPFILI.

The protein belongs to the anion exchanger (TC 2.A.31) family.

The protein resides in the apical cell membrane. Its subcellular location is the basolateral cell membrane. The enzyme catalyses hydrogencarbonate(in) + chloride(out) = hydrogencarbonate(out) + chloride(in). Sodium-independent anion exchanger which mediates the electroneutral exchange of chloride for bicarbonate ions across the cell membrane. Plays an important role in osteoclast differentiation and function. Regulates bone resorption and calpain-dependent actin cytoskeleton organization in osteoclasts via anion exchange-dependent control of pH. Essential for intracellular pH regulation in CD8(+) T-cells upon CD3 stimulation, modulating CD8(+) T-cell response. The polypeptide is Anion exchange protein 2 (SLC4A2) (Equus caballus (Horse)).